The primary structure comprises 319 residues: Protein quaking-B (319 aa).

The 67-residue stretch at 87–153 folds into the KH domain; sequence YVPVKEYPDF…WEHLNEDLHV (67 aa). The short motif at 276–279 is the SH3-binding element; it reads PQTP.

Belongs to the quaking family. Homodimer; does not require RNA to homodimerize.

It is found in the cytoplasm. The protein localises to the nucleus. Its function is as follows. RNA reader protein, which recognizes and binds specific RNAs, thereby regulating RNA metabolic processes, such as pre-mRNA splicing, circular RNA (circRNA) formation, mRNA export, mRNA stability and/or translation. Involved in various cellular processes, such as mRNA storage into stress granules, apoptosis, interferon response, glial cell fate and development. Binds to the 5'-NACUAAY-N(1,20)-UAAY-3' RNA core sequence. Acts as a mRNA modification reader that specifically recognizes and binds mRNA transcripts modified by internal N(7)-methylguanine (m7G). Promotes the formation of circular RNAs (circRNAs): acts by binding to sites flanking circRNA-forming exons. CircRNAs are produced by back-splicing circularization of pre-mRNAs. Required to protect and promote stability of mRNAs which promotes oligodendrocyte differentiation. Acts as an important regulator of muscle development: required during early skeletal myofibril formation by regulating the accumulation of the muscle-specific tropomyosin-3 (tpm3) transcripts. The sequence is that of Protein quaking-B (qki2) from Danio rerio (Zebrafish).